Consider the following 214-residue polypeptide: Adenylate kinase (214 aa).

10-15 (GVGKGT) serves as a coordination point for ATP. Positions 30–59 (STGDILRAAVKELTPMGAKAKGYMDSGALV) are NMP. AMP is bound by residues T31, R36, 57–59 (ALV), 85–88 (GFPR), and Q92. Residues 126–163 (GRRACANCGAGYHVDFAPSKVAGVCDACSGQLVQREDD) are LID. ATP is bound at residue R127. Residues C130, C133, C150, and C153 each contribute to the Zn(2+) site. Residues R160 and R171 each contribute to the AMP site. G199 lines the ATP pocket.

It belongs to the adenylate kinase family. As to quaternary structure, monomer.

Its subcellular location is the cytoplasm. The catalysed reaction is AMP + ATP = 2 ADP. It participates in purine metabolism; AMP biosynthesis via salvage pathway; AMP from ADP: step 1/1. Catalyzes the reversible transfer of the terminal phosphate group between ATP and AMP. Plays an important role in cellular energy homeostasis and in adenine nucleotide metabolism. This Citrifermentans bemidjiense (strain ATCC BAA-1014 / DSM 16622 / JCM 12645 / Bem) (Geobacter bemidjiensis) protein is Adenylate kinase.